Here is a 266-residue protein sequence, read N- to C-terminus: Imidazole glycerol phosphate synthase subunit HisF (266 aa).

Active-site residues include Asp-11 and Asp-130.

Belongs to the HisA/HisF family. Heterodimer of HisH and HisF.

It localises to the cytoplasm. The catalysed reaction is 5-[(5-phospho-1-deoxy-D-ribulos-1-ylimino)methylamino]-1-(5-phospho-beta-D-ribosyl)imidazole-4-carboxamide + L-glutamine = D-erythro-1-(imidazol-4-yl)glycerol 3-phosphate + 5-amino-1-(5-phospho-beta-D-ribosyl)imidazole-4-carboxamide + L-glutamate + H(+). It participates in amino-acid biosynthesis; L-histidine biosynthesis; L-histidine from 5-phospho-alpha-D-ribose 1-diphosphate: step 5/9. IGPS catalyzes the conversion of PRFAR and glutamine to IGP, AICAR and glutamate. The HisF subunit catalyzes the cyclization activity that produces IGP and AICAR from PRFAR using the ammonia provided by the HisH subunit. In Verminephrobacter eiseniae (strain EF01-2), this protein is Imidazole glycerol phosphate synthase subunit HisF.